Reading from the N-terminus, the 484-residue chain is tRNA sulfurtransferase (484 aa).

The 105-residue stretch at 63–167 (ELFAERLAHI…RDKLYMVSQR (105 aa)) folds into the THUMP domain. ATP contacts are provided by residues 185–186 (LI), lysine 267, glycine 289, and glutamine 298. A disulfide bridge connects residues cysteine 346 and cysteine 458. The Rhodanese domain occupies 406 to 484 (AAGNEVIIDI…GYNNVKVYRP (79 aa)). Catalysis depends on cysteine 458, which acts as the Cysteine persulfide intermediate.

The protein belongs to the ThiI family.

Its subcellular location is the cytoplasm. It carries out the reaction [ThiI sulfur-carrier protein]-S-sulfanyl-L-cysteine + a uridine in tRNA + 2 reduced [2Fe-2S]-[ferredoxin] + ATP + H(+) = [ThiI sulfur-carrier protein]-L-cysteine + a 4-thiouridine in tRNA + 2 oxidized [2Fe-2S]-[ferredoxin] + AMP + diphosphate. The catalysed reaction is [ThiS sulfur-carrier protein]-C-terminal Gly-Gly-AMP + S-sulfanyl-L-cysteinyl-[cysteine desulfurase] + AH2 = [ThiS sulfur-carrier protein]-C-terminal-Gly-aminoethanethioate + L-cysteinyl-[cysteine desulfurase] + A + AMP + 2 H(+). Its pathway is cofactor biosynthesis; thiamine diphosphate biosynthesis. Catalyzes the ATP-dependent transfer of a sulfur to tRNA to produce 4-thiouridine in position 8 of tRNAs, which functions as a near-UV photosensor. Also catalyzes the transfer of sulfur to the sulfur carrier protein ThiS, forming ThiS-thiocarboxylate. This is a step in the synthesis of thiazole, in the thiamine biosynthesis pathway. The sulfur is donated as persulfide by IscS. This Shewanella amazonensis (strain ATCC BAA-1098 / SB2B) protein is tRNA sulfurtransferase.